Consider the following 119-residue polypeptide: UPF0102 protein FN1370 (119 aa).

The protein belongs to the UPF0102 family.

The sequence is that of UPF0102 protein FN1370 from Fusobacterium nucleatum subsp. nucleatum (strain ATCC 25586 / DSM 15643 / BCRC 10681 / CIP 101130 / JCM 8532 / KCTC 2640 / LMG 13131 / VPI 4355).